A 363-amino-acid chain; its full sequence is MAPAGHPGAKRGILERLESGEVVIGDGSFLITLEKRGYVKAGLWTPEAVIEHPDAVRQLHMEFLRAGSNVMQTFTFSASEDNMESKWEDVNAAACDLAREVAGKGDALVAGGICQTSIYKYHKDEARIKKLFRQQLEVFAWKNVDFLIAEYFEHVEEAVWAVEVLKESDRPVAVTMCISPEGDMHDITPGECAVRLVKAGASIVGVNCRFGPETSLKTIELMKEGLQRAGLKAHLMVQPLGFHTPDCGKEGFVDLPEYPFGLESRAATRWDIQKYAREAYNQGVRYIGGCCGFEPYHIRAIAEELAPERGFLPPASEKHGSWGSALDMHTKPWVRARARREYWENLLPASGRPFCPSLSKPDV.

The Hcy-binding domain maps to 11-305 (RGILERLESG…YHIRAIAEEL (295 aa)). 3 residues coordinate Zn(2+): Cys208, Cys290, and Cys291. Ser321 bears the Phosphoserine mark.

In terms of assembly, homotetramer. Zn(2+) serves as cofactor.

The catalysed reaction is S-methyl-L-methionine + L-homocysteine = 2 L-methionine + H(+). It functions in the pathway amino-acid biosynthesis; L-methionine biosynthesis via de novo pathway; L-methionine from L-homocysteine (BhmT route): step 1/1. In terms of biological role, involved in the regulation of homocysteine metabolism. Converts betaine and homocysteine to dimethylglycine and methionine, respectively. This reaction is also required for the irreversible oxidation of choline. In Pongo abelii (Sumatran orangutan), this protein is S-methylmethionine--homocysteine S-methyltransferase BHMT2 (BHMT2).